Here is a 191-residue protein sequence, read N- to C-terminus: Peptidyl-tRNA hydrolase (191 aa).

Tyr17 is a binding site for tRNA. The active-site Proton acceptor is the His22. 3 residues coordinate tRNA: Tyr68, Asn70, and Asn116.

It belongs to the PTH family. As to quaternary structure, monomer.

It is found in the cytoplasm. The catalysed reaction is an N-acyl-L-alpha-aminoacyl-tRNA + H2O = an N-acyl-L-amino acid + a tRNA + H(+). Functionally, hydrolyzes ribosome-free peptidyl-tRNAs (with 1 or more amino acids incorporated), which drop off the ribosome during protein synthesis, or as a result of ribosome stalling. In terms of biological role, catalyzes the release of premature peptidyl moieties from peptidyl-tRNA molecules trapped in stalled 50S ribosomal subunits, and thus maintains levels of free tRNAs and 50S ribosomes. The polypeptide is Peptidyl-tRNA hydrolase (Mycobacterium avium (strain 104)).